Here is a 206-residue protein sequence, read N- to C-terminus: Probable glutathione S-transferase 6 (206 aa).

In terms of domain architecture, GST N-terminal spans 2 to 79 (VHYKLVYFPL…YLAREFGIAG (78 aa)). Glutathione is bound by residues Y8, W39, K43, 49-51 (GQL), and 63-64 (QS). The region spanning 81 to 206 (NDTEAAEVDA…YIANRPDYPF (126 aa)) is the GST C-terminal domain.

This sequence belongs to the GST superfamily. Sigma family.

The catalysed reaction is RX + glutathione = an S-substituted glutathione + a halide anion + H(+). Conjugation of reduced glutathione to a wide number of exogenous and endogenous hydrophobic electrophiles. This is Probable glutathione S-transferase 6 (gst-6) from Caenorhabditis elegans.